The chain runs to 330 residues: MQTNLLKPKTINVEQLGHNRAKVALEPFERGYGHTLGNAIRRVLLSSMVGYAATEVTIAGVLHEYSSIDGVQEDVVNILLNLKGVVFKLHNRDEVTLSLRKDGEGVVTARDIQTPHDVEIVNPDHVIAHLSQGGKLDMQIKVEKGRGYVPGNLRRYADESTKSIGRIVLDASFSPVKRVSYTVESARVEQRTDLDKLVVEIETNGAITAEDAVRASAKILVEQLAVFAQLEGGELAAFDTPAGPRGSATFDPILLRPVDELELTVRSANCLKAENIYYIGDLIQRTENELLKTPNLGRKSLNEIKEVLASRGLTLGMKLENWPPAGLDKR.

Residues 1–231 (MQTNLLKPKT…EQLAVFAQLE (231 aa)) form an alpha N-terminal domain (alpha-NTD) region. Residues 250-330 (FDPILLRPVD…NWPPAGLDKR (81 aa)) form an alpha C-terminal domain (alpha-CTD) region.

It belongs to the RNA polymerase alpha chain family. Homodimer. The RNAP catalytic core consists of 2 alpha, 1 beta, 1 beta' and 1 omega subunit. When a sigma factor is associated with the core the holoenzyme is formed, which can initiate transcription.

It catalyses the reaction RNA(n) + a ribonucleoside 5'-triphosphate = RNA(n+1) + diphosphate. DNA-dependent RNA polymerase catalyzes the transcription of DNA into RNA using the four ribonucleoside triphosphates as substrates. The polypeptide is DNA-directed RNA polymerase subunit alpha (Paracidovorax citrulli (strain AAC00-1) (Acidovorax citrulli)).